A 171-amino-acid polypeptide reads, in one-letter code: Protein TIFY 11d (171 aa).

The Tify domain maps to 65 to 100 (PSAGTAPLTIFYDGRMVVVDDVPAEKAAELMRLAGS). A Jas motif is present at residues 117 to 142 (PIARKASLQRFLQKRKHRITTTSEPY). A Nuclear localization signal motif is present at residues 119–126 (ARKASLQR).

This sequence belongs to the TIFY/JAZ family. In terms of assembly, interacts with BHLH148 and COI1A. Interacts with COI1A, COI1B and COI2 in a coronatine-dependent manner. Coronatine is an analog of jasmonoyl isoleucine (JA-Ile). In terms of processing, ubiquitinated. Increase in jasmonoyl isoleucine (JA-Ile) levels mediates its degradation via COI1A-mediated proteasome pathway.

It localises to the nucleus. Repressor of jasmonate (JA) responses. May act on an initial response of JA-regulated gene expression toward drought tolerance as part of a BHLH148-TIFY11D/JAZ12-COI1A complex. The chain is Protein TIFY 11d from Oryza sativa subsp. indica (Rice).